Here is a 431-residue protein sequence, read N- to C-terminus: Reverse prenyltransferase criA (431 aa).

The dimethylallyl diphosphate site is built by Arg-104, Lys-193, Tyr-195, Lys-262, Tyr-264, Tyr-347, Tyr-412, and Tyr-416.

Belongs to the tryptophan dimethylallyltransferase family. In terms of assembly, monomer.

The catalysed reaction is cyclo(L-tryptophyl-L-alanyl) + dimethylallyl diphosphate = preechinulin + diphosphate. It participates in secondary metabolite biosynthesis. Its pathway is alkaloid biosynthesis. Reverse prenyltransferase; part of the gene cluster that mediates the biosynthesis of echinulin family alkaloid. The pathway begins with the biosynthesis of the cyclic dipeptide cyclo-L-Trp-L-Ala (cyclo-TA) by the NRPS criC via condensation of L-alanine and L-tryptophan. The prenyltransferase criA then catalyzes the first prenylation step, a reverse prenylation reaction at C2, to yield preechinulin. Preechinulin is the substrate of the cytochrome P450 monooxygenase criE that catalyzes the formation of the double bond between C10 and C11 to produce neoechulin A. The unique prenyltransferase criF functions as a competitive enzyme with criE for preechinulin metabolization and uses preechinulin for effective regiospecific prenylations. Preechinulin is prenylated by criF at C5 or C7. C7-prenylation leads to accumulation of tardioxopiperazine B without further modification by criF. In contrast, the C5-prenylated tardioxopiperazine A can be prenylated again by criF, predominantly at C7 to form echinulin or less frequently at C4 to give variecolorin L. CriF also accepts neoechilunin A to produce varlecolorin G (prenylation at C5) or isoechinulin A (prenylation at C7). CriF further converts isoechinulin A into dehydroechinulin. Moreover, a yet unidentified enzyme can also convert neoechilunin A into neoechilunin B by introducing a double bond between positions C14 and C17 and thus provides a further substrate to criF for C5 and C7 prenylation. The polypeptide is Reverse prenyltransferase criA (Aspergillus cristatus (Chinese Fuzhuan brick tea-fermentation fungus)).